Consider the following 346-residue polypeptide: NADH-ubiquinone oxidoreductase chain 2 (346 aa).

The next 11 helical transmembrane spans lie at Met-1 to Ile-21, His-25 to Ser-45, Phe-60 to Ala-80, Cys-95 to Phe-115, Leu-124 to Met-144, Leu-149 to Gly-169, Ile-178 to Val-195, Leu-200 to Leu-219, Ala-242 to Pro-262, Glu-274 to Leu-294, and Ala-326 to Val-346.

The protein belongs to the complex I subunit 2 family.

Its subcellular location is the mitochondrion inner membrane. The catalysed reaction is a ubiquinone + NADH + 5 H(+)(in) = a ubiquinol + NAD(+) + 4 H(+)(out). In terms of biological role, core subunit of the mitochondrial membrane respiratory chain NADH dehydrogenase (Complex I) that is believed to belong to the minimal assembly required for catalysis. Complex I functions in the transfer of electrons from NADH to the respiratory chain. The immediate electron acceptor for the enzyme is believed to be ubiquinone. This Sibirionetta formosa (Baikal teal) protein is NADH-ubiquinone oxidoreductase chain 2 (MT-ND2).